Consider the following 907-residue polypeptide: Valine--tRNA ligase (907 aa).

Positions 45 to 55 match the 'HIGH' region motif; sequence PNVTGSLHMGH. The 'KMSKS' region motif lies at 554–558; that stretch reads KMSKS. Residue Lys-557 coordinates ATP. Positions 838 to 870 form a coiled coil; the sequence is GQLIDLEAERARLMKDVSKIEQDIEKLSAKLSN.

It belongs to the class-I aminoacyl-tRNA synthetase family. ValS type 1 subfamily. In terms of assembly, monomer.

The protein localises to the cytoplasm. It carries out the reaction tRNA(Val) + L-valine + ATP = L-valyl-tRNA(Val) + AMP + diphosphate. In terms of biological role, catalyzes the attachment of valine to tRNA(Val). As ValRS can inadvertently accommodate and process structurally similar amino acids such as threonine, to avoid such errors, it has a 'posttransfer' editing activity that hydrolyzes mischarged Thr-tRNA(Val) in a tRNA-dependent manner. The protein is Valine--tRNA ligase of Bartonella henselae (strain ATCC 49882 / DSM 28221 / CCUG 30454 / Houston 1) (Rochalimaea henselae).